We begin with the raw amino-acid sequence, 370 residues long: Anhydro-N-acetylmuramic acid kinase (370 aa).

12–19 is an ATP binding site; sequence GTSLDGVD.

The protein belongs to the anhydro-N-acetylmuramic acid kinase family.

The enzyme catalyses 1,6-anhydro-N-acetyl-beta-muramate + ATP + H2O = N-acetyl-D-muramate 6-phosphate + ADP + H(+). It participates in amino-sugar metabolism; 1,6-anhydro-N-acetylmuramate degradation. It functions in the pathway cell wall biogenesis; peptidoglycan recycling. Functionally, catalyzes the specific phosphorylation of 1,6-anhydro-N-acetylmuramic acid (anhMurNAc) with the simultaneous cleavage of the 1,6-anhydro ring, generating MurNAc-6-P. Is required for the utilization of anhMurNAc either imported from the medium or derived from its own cell wall murein, and thus plays a role in cell wall recycling. The protein is Anhydro-N-acetylmuramic acid kinase of Proteus mirabilis (strain HI4320).